Consider the following 339-residue polypeptide: DNA-directed RNA polymerase subunit alpha (339 aa).

The tract at residues Met1–Glu233 is alpha N-terminal domain (alpha-NTD). Residues Lys264 to Phe339 are alpha C-terminal domain (alpha-CTD).

Belongs to the RNA polymerase alpha chain family. As to quaternary structure, in plastids the minimal PEP RNA polymerase catalytic core is composed of four subunits: alpha, beta, beta', and beta''. When a (nuclear-encoded) sigma factor is associated with the core the holoenzyme is formed, which can initiate transcription.

It is found in the plastid. The protein localises to the chloroplast. It carries out the reaction RNA(n) + a ribonucleoside 5'-triphosphate = RNA(n+1) + diphosphate. DNA-dependent RNA polymerase catalyzes the transcription of DNA into RNA using the four ribonucleoside triphosphates as substrates. The sequence is that of DNA-directed RNA polymerase subunit alpha from Australopyrum velutinum (Mountain wheat-grass).